An 85-amino-acid chain; its full sequence is U4-theraphotoxin-Hhn1c (85 aa).

The signal sequence occupies residues 1-22 (MKVTLIAILTCAAVLVLHTTAA). The propeptide occupies 23-48 (EELEAESQLMEVGMPDTELAAVDEER). 3 disulfides stabilise this stretch: Cys52/Cys66, Cys56/Cys77, and Cys71/Cys82.

Belongs to the neurotoxin 12 (Hwtx-2) family. 02 (Hwtx-2) subfamily. In terms of tissue distribution, expressed by the venom gland.

Its subcellular location is the secreted. Its function is as follows. Postsynaptic neurotoxin. This Cyriopagopus hainanus (Chinese bird spider) protein is U4-theraphotoxin-Hhn1c.